Here is a 323-residue protein sequence, read N- to C-terminus: uncharacterized protein (323 aa).

The next 3 helical transmembrane spans lie at 8–28 (FLVI…MFME), 32–52 (LTLL…PFSL), and 92–112 (ITIF…CGIF).

It is found in the mitochondrion membrane. This is an uncharacterized protein from Neurospora crassa (strain ATCC 24698 / 74-OR23-1A / CBS 708.71 / DSM 1257 / FGSC 987).